A 1052-amino-acid chain; its full sequence is Membrane-bound transcription factor site-1 protease (1052 aa).

A signal peptide spans 1–17 (MKLVSTWLLVLVVLLCG). The propeptide occupies 18–186 (KRHLGDRLGT…TGRHSSRRLL (169 aa)). N-linked (GlcNAc...) asparagine glycosylation is present at Asn148. Position 168 is a phosphoserine (Ser168). Residues 187-999 (RAIPRQVAQT…MPGRYNQEVG (813 aa)) are Lumenal-facing. Positions 190 to 472 (PRQVAQTLQA…HGKLDLLRAY (283 aa)) constitute a Peptidase S8 domain. Asp218 (charge relay system) is an active-site residue. N-linked (GlcNAc...) asparagine glycosylation occurs at Asn236. Residue His249 is the Charge relay system of the active site. An N-linked (GlcNAc...) asparagine glycan is attached at Asn305. The active-site Charge relay system is the Ser414. Residues Asn515 and Asn728 are each glycosylated (N-linked (GlcNAc...) asparagine). Polar residues predominate over residues 877–887 (PSLSHSGNRQR). Residues 877–900 (PSLSHSGNRQRPPSGAGLAPPERM) form a disordered region. Asn939 is a glycosylation site (N-linked (GlcNAc...) asparagine). The helical transmembrane segment at 1000–1022 (QTIPVFAFLGAMVALAFFVVQIS) threads the bilayer. Over 1023 to 1052 (KAKSRPKRRRPRAKRPQLAQQAHPARTPSV) the chain is Cytoplasmic. Residues 1026–1037 (SRPKRRRPRAKR) show a composition bias toward basic residues. The segment at 1026-1052 (SRPKRRRPRAKRPQLAQQAHPARTPSV) is disordered.

This sequence belongs to the peptidase S8 family. In terms of assembly, interacts with LYSET; this interaction bridges GNPTAB to MBTPS1. The cofactor is Ca(2+). The 148 kDa zymogen is processed progressively into two membrane-bound 120 and 106 kDa forms in the endoplasmic reticulum, and late into a secreted 98 kDa form. The propeptide is autocatalytically removed through an intramolecular cleavage after Leu-186. Further cleavage generates 14, 10, and 8 kDa intermediates.

It is found in the endoplasmic reticulum membrane. Its subcellular location is the golgi apparatus membrane. The enzyme catalyses Processes precursors containing basic and hydrophobic/aliphatic residues at P4 and P2, respectively, with a relatively relaxed acceptance of amino acids at P1 and P3.. With respect to regulation, inhibited by divalent copper and zinc ions, but not by nickel or cobalt. Inhibited by its prosegment, but not smaller fragments. Inhibited by 4-(2-aminoethyl)benzenesulfonyl fluoride (AEBSF), a serine protease inhibitor. Functionally, serine protease that cleaves after hydrophobic or small residues, provided that Arg or Lys is in position P4: known substrates include SREBF1/SREBP1, SREBF2/SREBP2, BDNF, GNPTAB, ATF6, ATF6B and FAM20C. Cleaves substrates after Arg-Ser-Val-Leu (SREBP2), Arg-His-Leu-Leu (ATF6), Arg-Gly-Leu-Thr (BDNF) and its own propeptide after Arg-Arg-Leu-Leu. Catalyzes the first step regulated intramembrane proteolysis activation of the sterol regulatory element-binding proteins (SREBPs) SREBF1/SREBP1 and SREBF2/SREBP2. Also mediates the first step of the regulated intramembrane proteolytic activation of the cyclic AMP-dependent transcription factor ATF-6 (ATF6 and ATF6B). Mediates the protein cleavage of GNPTAB into subunit alpha and beta, thereby participating in biogenesis of lysosomes. Cleaves the propeptide from FAM20C which is required for FAM20C secretion from the Golgi apparatus membrane and for enhancement of FAM20C kinase activity, promoting osteoblast differentiation and biomineralization. Involved in the regulation of M6P-dependent Golgi-to-lysosome trafficking of lysosomal enzymes. It is required for the activation of CREB3L2/BBF2H7, a transcriptional activator of MIA3/TANGO and other genes controlling mega vesicle formation. Therefore, it plays a key role in the regulation of mega vesicle-mediated collagen trafficking. In astrocytes and osteoblasts, upon DNA damage and ER stress, mediates the first step of the regulated intramembrane proteolytic activation of the transcription factor CREB3L1, leading to the inhibition of cell-cycle progression. The sequence is that of Membrane-bound transcription factor site-1 protease (Mbtps1) from Mus musculus (Mouse).